A 331-amino-acid polypeptide reads, in one-letter code: Quinone oxidoreductase (331 aa).

N-acetylalanine is present on Ala-2. Lys-23 is subject to N6-acetyllysine. Position 35 is a phosphoserine (Ser-35). NADP(+)-binding positions include Tyr-53, Ser-158 to Val-161, and Gly-181. At Lys-186 the chain carries N6-acetyllysine. Residues His-200, Asn-231, Val-248–Arg-251, and Val-271–Leu-273 each bind NADP(+). At Lys-298 the chain carries N6-succinyllysine.

This sequence belongs to the zinc-containing alcohol dehydrogenase family. Quinone oxidoreductase subfamily. Homotetramer.

The protein localises to the cytoplasm. The enzyme catalyses 2 a quinone + NADPH + H(+) = 2 a 1,4-benzosemiquinone + NADP(+). Functionally, does not have alcohol dehydrogenase activity. Binds NADP and acts through a one-electron transfer process. Orthoquinones, such as 1,2-naphthoquinone or 9,10-phenanthrenequinone, are the best substrates (in vitro). May act in the detoxification of xenobiotics. Interacts with (AU)-rich elements (ARE) in the 3'-UTR of target mRNA species and enhances their stability. NADPH binding interferes with mRNA binding. The sequence is that of Quinone oxidoreductase (Cryz) from Mus musculus (Mouse).